The following is a 270-amino-acid chain: Probable septum site-determining protein MinC (270 aa).

A disordered region spans residues 105-129; the sequence is DRRAPSSKAADEAPVQQAEPAAPAA. Residues 116 to 129 are compositionally biased toward low complexity; it reads EAPVQQAEPAAPAA.

It belongs to the MinC family. As to quaternary structure, interacts with MinD and FtsZ.

Functionally, cell division inhibitor that blocks the formation of polar Z ring septums. Rapidly oscillates between the poles of the cell to destabilize FtsZ filaments that have formed before they mature into polar Z rings. Prevents FtsZ polymerization. The protein is Probable septum site-determining protein MinC of Burkholderia pseudomallei (strain 1106a).